We begin with the raw amino-acid sequence, 1423 residues long: Guanine nucleotide exchange factor subunit RIC1 (1423 aa).

WD repeat units lie at residues 64 to 103 (TQFG…GDKY) and 304 to 343 (NKTG…LICT). Residues 437 to 448 (ASQTQNPRSSST) are compositionally biased toward polar residues. The segment at 437 to 463 (ASQTQNPRSSSTHSEHKPSREKSPFAD) is disordered. Positions 449 to 460 (HSEHKPSREKSP) are enriched in basic and acidic residues. Phosphothreonine is present on residues T992 and T996. 5 positions are modified to phosphoserine: S1015, S1017, S1019, S1037, and S1172. The tract at residues 1355–1423 (PDAFQPITMG…QDGTYDCSVS (69 aa)) is disordered. Residues 1379–1397 (GSSSHGSIPQGEVGSSNMV) show a composition bias toward polar residues. Residues 1404–1413 (TAQAEEEEPF) show a composition bias toward acidic residues.

This sequence belongs to the RIC1 family. In terms of assembly, forms a complex with RGP1; the interaction enhances RAB6A GTPase activity. Interacts (via central domain) with RGP1. Interacts with RAB6A; the interaction is direct with a preference for RAB6A-GDP. Interacts (via C-terminus domain) with RAB33B; the interaction is direct with a preference for RAB33B-GTP. Interacts with GJA1. In terms of tissue distribution, present in kidney and various cell lines (at protein level). Widely expressed at low level.

Its subcellular location is the cytoplasm. The protein localises to the cytosol. The protein resides in the membrane. Functionally, the RIC1-RGP1 complex acts as a guanine nucleotide exchange factor (GEF), which activates RAB6A by exchanging bound GDP for free GTP, and may thereby be required for efficient fusion of endosome-derived vesicles with the Golgi compartment. The RIC1-RGP1 complex participates in the recycling of mannose-6-phosphate receptors. Required for phosphorylation and localization of GJA1. Is a regulator of procollagen transport and secretion, and is required for correct cartilage morphogenesis and development of the craniofacial skeleton. In Homo sapiens (Human), this protein is Guanine nucleotide exchange factor subunit RIC1.